The sequence spans 320 residues: UDP-3-O-acyl-N-acetylglucosamine deacetylase (320 aa).

Residues His-92, His-251, and Asp-255 each coordinate Zn(2+). His-278 acts as the Proton donor in catalysis.

This sequence belongs to the LpxC family. Requires Zn(2+) as cofactor.

The enzyme catalyses a UDP-3-O-[(3R)-3-hydroxyacyl]-N-acetyl-alpha-D-glucosamine + H2O = a UDP-3-O-[(3R)-3-hydroxyacyl]-alpha-D-glucosamine + acetate. Its pathway is glycolipid biosynthesis; lipid IV(A) biosynthesis; lipid IV(A) from (3R)-3-hydroxytetradecanoyl-[acyl-carrier-protein] and UDP-N-acetyl-alpha-D-glucosamine: step 2/6. Functionally, catalyzes the hydrolysis of UDP-3-O-myristoyl-N-acetylglucosamine to form UDP-3-O-myristoylglucosamine and acetate, the committed step in lipid A biosynthesis. This chain is UDP-3-O-acyl-N-acetylglucosamine deacetylase, found in Psychrobacter cryohalolentis (strain ATCC BAA-1226 / DSM 17306 / VKM B-2378 / K5).